The primary structure comprises 597 residues: NADPH-dependent diflavin oxidoreductase 1 (597 aa).

Residues Leu-6 to Trp-150 form the Flavodoxin-like domain. Residues Ser-12–Ala-17, Ala-59–Gly-62, Leu-97–Asn-106, and Asp-132 each bind FMN. Residues Leu-206–Pro-446 form the FAD-binding FR-type domain. FAD is bound by residues Arg-350, Arg-382–Ser-385, and Gly-416–Ser-419. NADP(+) is bound by residues Thr-460, Ser-515–Arg-516, Lys-521–Gln-525, and Asp-558. Trp-596 is an FAD binding site.

It belongs to the NADPH-dependent diflavin oxidoreductase NDOR1 family. This sequence in the N-terminal section; belongs to the flavodoxin family. In the C-terminal section; belongs to the flavoprotein pyridine nucleotide cytochrome reductase family. Interacts with CIAPIN1; as part of the cytosolic iron-sulfur (Fe-S) protein assembly (CIA) machinery. Interacts with DCPS. FAD serves as cofactor. Requires FMN as cofactor.

The protein localises to the cytoplasm. It is found in the perinuclear region. It catalyses the reaction 2 oxidized [2Fe-2S]-[protein] + NADPH = 2 reduced [2Fe-2S]-[protein] + NADP(+) + H(+). In terms of biological role, NADPH-dependent reductase which is a central component of the cytosolic iron-sulfur (Fe-S) protein assembly (CIA) machinery. Transfers electrons from NADPH via its FAD and FMN prosthetic groups to the [2Fe-2S] cluster of CIAPIN1, another key component of the CIA machinery. In turn, this reduced cluster provides electrons for assembly of cytosolic iron-sulfur cluster proteins. It can also reduce the [2Fe-2S] cluster of CISD1 and activate this protein implicated in Fe/S cluster repair. In vitro can fully activate methionine synthase/MTR in the presence of soluble cytochrome b5/CYB5A. The protein is NADPH-dependent diflavin oxidoreductase 1 of Bos taurus (Bovine).